The primary structure comprises 1700 residues: Ras-responsive element-binding protein 1 (1700 aa).

The interval 31–63 (TENGGSPQGIKSPMKPPGPNRIGRRNQETKEEK) is disordered. 2 positions are modified to phosphoserine: Ser-36 and Ser-42. 3 C2H2-type zinc fingers span residues 66–88 (YNCPLCEKICTTQHQLTMHIRQH), 97–119 (HACSICGKSLSSASSLDRHMLVH), and 125–147 (YKCTVCGQSFTTNGNMHRHMKIH). The tract at residues 146-195 (IHEKDTNSTTAAAPPSPLKRRRLSSKRKLSHDAESEDPGPAKKMVEDGQS) is disordered. Position 161 is a phosphoserine (Ser-161). Residues 163–174 (LKRRRLSSKRKL) are compositionally biased toward basic residues. A phosphoserine mark is found at Ser-175 and Ser-180. Basic and acidic residues predominate over residues 184 to 195 (GPAKKMVEDGQS). The C2H2-type 4 zinc-finger motif lies at 206 to 228 (FHCPVCFKEFVCKYELETHMETH). Ser-229 bears the Phosphoserine mark. 2 C2H2-type zinc fingers span residues 233-256 (LRCDICCVTFRTHRGLLRHNALVH) and 314-336 (FVCDTCDKAFPMLSSLILHRQSH). Glycyl lysine isopeptide (Lys-Gly) (interchain with G-Cter in SUMO2) cross-links involve residues Lys-433, Lys-500, Lys-549, Lys-564, Lys-591, and Lys-611. Lys-613 participates in a covalent cross-link: Glycyl lysine isopeptide (Lys-Gly) (interchain with G-Cter in SUMO1); alternate. Residue Lys-613 forms a Glycyl lysine isopeptide (Lys-Gly) (interchain with G-Cter in SUMO2); alternate linkage. A Glycyl lysine isopeptide (Lys-Gly) (interchain with G-Cter in SUMO2) cross-link involves residue Lys-622. 5 consecutive C2H2-type zinc fingers follow at residues 641–663 (YPCRFCNQVFAFSGVLRAHVRSH), 669–691 (YQCNICDYIAADKAALIRHIRTH), 697–720 (YICKICHYPFTVKANCERHLRKKH), 751–782 (TVCRLCGEDLKHYRALRIHMRTHCSRGLGGCH), and 788–813 (FECKECNAPFVAKRNCIHHILKQHLH). Residues Lys-855, Lys-883, and Lys-911 each participate in a glycyl lysine isopeptide (Lys-Gly) (interchain with G-Cter in SUMO2) cross-link. Disordered stretches follow at residues 939–991 (IPKS…SLET) and 1092–1177 (ADPG…AVDL). Positions 944–961 (KKGDKDTVVPSDAKKPEP) are enriched in basic and acidic residues. At Ser-970 the chain carries Phosphoserine. The span at 1097-1111 (SITSSNTVATDSPGS) shows a compositional bias: polar residues. Phosphoserine is present on residues Ser-1125, Ser-1137, and Ser-1138. Low complexity predominate over residues 1137-1146 (SSPEEALPTE). Basic residues predominate over residues 1155 to 1165 (SRKRGRKRGLR). Residues Ser-1172, Ser-1179, Ser-1180, and Ser-1230 each carry the phosphoserine modification. Disordered regions lie at residues 1195-1235 (TNKF…AEDR), 1273-1368 (HTDS…QSLD), 1383-1521 (SEAG…RKKV), and 1564-1670 (VRHQ…SPAA). The C2H2-type 12 zinc-finger motif lies at 1251 to 1273 (INCPHCPRVFPWASSLQRHMLTH). Over residues 1273–1285 (HTDSQSDTDTLTT) the composition is skewed to low complexity. Positions 1327–1346 (SEEEEEKETEENPEPEEECR) are enriched in acidic residues. Residues 1400–1422 (HACDTCGKNFKFLGTLSRHKKAH) form a C2H2-type 13 zinc finger. Ser-1450 and Ser-1452 each carry phosphoserine. Residues 1492–1507 (TAEKRGDGDKRPKTDS) are compositionally biased toward basic and acidic residues. C2H2-type zinc fingers lie at residues 1520-1542 (KVCSVCNKRFWSLQDLTRHMRSH) and 1548-1570 (YKCQTCERTFTLKHSLVRHQRIH). Over residues 1564-1580 (VRHQRIHQKARHSKHHG) the composition is skewed to basic residues. A phosphoserine mark is found at Ser-1593 and Ser-1606. Low complexity predominate over residues 1645-1660 (AEQAAEPSAPKEQASP). Ser-1667 carries the phosphoserine modification.

It belongs to the krueppel C2H2-type zinc-finger protein family. Interacts with NEUROD1. Interacts with AR. Expressed in splenic B-cells.

Its subcellular location is the nucleus speckle. Functionally, transcription factor that binds specifically to the RAS-responsive elements (RRE) of gene promoters. Represses the angiotensinogen gene. Negatively regulates the transcriptional activity of AR. Potentiates the transcriptional activity of NEUROD1. Binds specifically to the allelic variant of the CDKN2A promoter present in Balb/c mice, which leads to a down-regulation of CDKN2A expression in this strain, and, as a consequence, to an elevated susceptibility to pristane-induced tumors. Promotes brown adipocyte differentiation. May be involved in Ras/Raf-mediated cell differentiation by enhancing calcitonin expression. This chain is Ras-responsive element-binding protein 1 (Rreb1), found in Mus musculus (Mouse).